A 302-amino-acid chain; its full sequence is Sulfate adenylyltransferase subunit 2 (302 aa).

The protein belongs to the PAPS reductase family. CysD subfamily. In terms of assembly, heterodimer composed of CysD, the smaller subunit, and CysN.

The enzyme catalyses sulfate + ATP + H(+) = adenosine 5'-phosphosulfate + diphosphate. The protein operates within sulfur metabolism; hydrogen sulfide biosynthesis; sulfite from sulfate: step 1/3. Functionally, with CysN forms the ATP sulfurylase (ATPS) that catalyzes the adenylation of sulfate producing adenosine 5'-phosphosulfate (APS) and diphosphate, the first enzymatic step in sulfur assimilation pathway. APS synthesis involves the formation of a high-energy phosphoric-sulfuric acid anhydride bond driven by GTP hydrolysis by CysN coupled to ATP hydrolysis by CysD. In Salmonella schwarzengrund (strain CVM19633), this protein is Sulfate adenylyltransferase subunit 2.